The sequence spans 64 residues: Putative antitoxin VapB51 (64 aa).

Its function is as follows. Possibly the antitoxin component of a type II toxin-antitoxin (TA) system. Its cognate toxin is VapC51. The protein is Putative antitoxin VapB51 of Mycobacterium tuberculosis (strain ATCC 25618 / H37Rv).